The following is a 200-amino-acid chain: MSEALTELASYLGEARGNLIAASQMKYGELTLTTTGENLVALLTFLRDDAKCGFVNLIDICGVDWPQRELRFDVVYHLLSPKKNLRIRVKVATDEDTPVPSACPVYPGADWFERETWDMYGVLFTGHPDLRRILTDYGFEGHPLRKDFPTTGFVEVRYDDAAKRVVYEPVELKQEFRNFDFMSPWEGTEYVLPGDEKAKQ.

It belongs to the complex I 30 kDa subunit family. As to quaternary structure, NDH-1 is composed of 14 different subunits. Subunits NuoB, C, D, E, F, and G constitute the peripheral sector of the complex.

The protein localises to the cell inner membrane. It catalyses the reaction a quinone + NADH + 5 H(+)(in) = a quinol + NAD(+) + 4 H(+)(out). Its function is as follows. NDH-1 shuttles electrons from NADH, via FMN and iron-sulfur (Fe-S) centers, to quinones in the respiratory chain. The immediate electron acceptor for the enzyme in this species is believed to be ubiquinone. Couples the redox reaction to proton translocation (for every two electrons transferred, four hydrogen ions are translocated across the cytoplasmic membrane), and thus conserves the redox energy in a proton gradient. The protein is NADH-quinone oxidoreductase subunit C of Rhizobium johnstonii (strain DSM 114642 / LMG 32736 / 3841) (Rhizobium leguminosarum bv. viciae).